We begin with the raw amino-acid sequence, 61 residues long: Large ribosomal subunit protein bL32 (61 aa).

Residues 1 to 19 are compositionally biased toward basic residues; sequence MAHPKRRQSKTRTAKRRTH. A disordered region spans residues 1 to 20; that stretch reads MAHPKRRQSKTRTAKRRTHD.

This sequence belongs to the bacterial ribosomal protein bL32 family.

In Porphyromonas gingivalis (strain ATCC 33277 / DSM 20709 / CIP 103683 / JCM 12257 / NCTC 11834 / 2561), this protein is Large ribosomal subunit protein bL32.